The chain runs to 500 residues: Probable malate:quinone oxidoreductase (500 aa).

The protein belongs to the MQO family. Requires FAD as cofactor.

It carries out the reaction (S)-malate + a quinone = a quinol + oxaloacetate. It participates in carbohydrate metabolism; tricarboxylic acid cycle; oxaloacetate from (S)-malate (quinone route): step 1/1. The chain is Probable malate:quinone oxidoreductase from Bacillus mycoides (strain KBAB4) (Bacillus weihenstephanensis).